The chain runs to 273 residues: Pyrroline-5-carboxylate reductase (273 aa).

Belongs to the pyrroline-5-carboxylate reductase family.

The protein resides in the cytoplasm. The catalysed reaction is L-proline + NADP(+) = (S)-1-pyrroline-5-carboxylate + NADPH + 2 H(+). It catalyses the reaction L-proline + NAD(+) = (S)-1-pyrroline-5-carboxylate + NADH + 2 H(+). The protein operates within amino-acid biosynthesis; L-proline biosynthesis; L-proline from L-glutamate 5-semialdehyde: step 1/1. In terms of biological role, catalyzes the reduction of 1-pyrroline-5-carboxylate (PCA) to L-proline. This is Pyrroline-5-carboxylate reductase from Pseudomonas aeruginosa (strain ATCC 15692 / DSM 22644 / CIP 104116 / JCM 14847 / LMG 12228 / 1C / PRS 101 / PAO1).